The following is a 334-amino-acid chain: Fructose-1,6-bisphosphatase class 1 (334 aa).

Residues Glu91, Asp113, Leu115, and Asp116 each contribute to the Mg(2+) site. Residues 116 to 119 (DGSS), Asn208, and Lys274 contribute to the substrate site. Glu280 provides a ligand contact to Mg(2+).

It belongs to the FBPase class 1 family. As to quaternary structure, homotetramer. Mg(2+) serves as cofactor.

Its subcellular location is the cytoplasm. It carries out the reaction beta-D-fructose 1,6-bisphosphate + H2O = beta-D-fructose 6-phosphate + phosphate. It functions in the pathway carbohydrate biosynthesis; gluconeogenesis. The sequence is that of Fructose-1,6-bisphosphatase class 1 from Herminiimonas arsenicoxydans.